The following is a 724-amino-acid chain: 1,4-alpha-glucan branching enzyme GlgB 1 (724 aa).

The active-site Nucleophile is aspartate 403. The active-site Proton donor is the glutamate 456.

This sequence belongs to the glycosyl hydrolase 13 family. GlgB subfamily. In terms of assembly, monomer.

It carries out the reaction Transfers a segment of a (1-&gt;4)-alpha-D-glucan chain to a primary hydroxy group in a similar glucan chain.. Its pathway is glycan biosynthesis; glycogen biosynthesis. Catalyzes the formation of the alpha-1,6-glucosidic linkages in glycogen by scission of a 1,4-alpha-linked oligosaccharide from growing alpha-1,4-glucan chains and the subsequent attachment of the oligosaccharide to the alpha-1,6 position. This Xanthomonas axonopodis pv. citri (strain 306) protein is 1,4-alpha-glucan branching enzyme GlgB 1 (glgB1).